Reading from the N-terminus, the 391-residue chain is 3-ketoacyl-CoA thiolase (391 aa).

Cys95 (acyl-thioester intermediate) is an active-site residue. Active-site proton acceptor residues include His347 and Cys377.

The protein belongs to the thiolase-like superfamily. Thiolase family. In terms of assembly, heterotetramer of two alpha chains (FadB) and two beta chains (FadA).

Its subcellular location is the cytoplasm. It carries out the reaction an acyl-CoA + acetyl-CoA = a 3-oxoacyl-CoA + CoA. It participates in lipid metabolism; fatty acid beta-oxidation. Functionally, catalyzes the final step of fatty acid oxidation in which acetyl-CoA is released and the CoA ester of a fatty acid two carbons shorter is formed. The chain is 3-ketoacyl-CoA thiolase from Pseudomonas entomophila (strain L48).